We begin with the raw amino-acid sequence, 277 residues long: Thiamine thiazole synthase (277 aa).

Residues Ser-36, Gly-63, Val-126, and 152–154 each bind NAD(+); that span reads HVD. Fe cation contacts are provided by Asp-154 and His-169. Position 230 (Met-230) interacts with NAD(+). Glycine is bound at residue Arg-240.

This sequence belongs to the THI4 family. In terms of assembly, homooctamer; tetramer of dimers. Requires Fe(2+) as cofactor.

It catalyses the reaction hydrogen sulfide + glycine + NAD(+) = ADP-5-ethyl-4-methylthiazole-2-carboxylate + nicotinamide + 3 H2O + H(+). The protein operates within cofactor biosynthesis; thiamine diphosphate biosynthesis. Its function is as follows. Involved in the biosynthesis of the thiazole moiety of thiamine. Catalyzes the conversion of NAD and glycine to adenosine diphosphate 5-(2-hydroxyethyl)-4-methylthiazole-2-carboxylate (ADT), an adenylated thiazole intermediate, using free sulfide as a source of sulfur. This chain is Thiamine thiazole synthase, found in Fervidobacterium nodosum (strain ATCC 35602 / DSM 5306 / Rt17-B1).